The sequence spans 316 residues: Glutamyl endopeptidase (316 aa).

The signal sequence occupies residues 1-30; it reads MVSKKSVKRGLITGLIGISIYSLGMHPAQA. Residues 31–94 constitute a propeptide that is removed on maturation; the sequence is APSPHTPVSS…SPAKAPYSIK (64 aa). Residues cysteine 126 and cysteine 142 are joined by a disulfide bond. Residues histidine 141 and serine 261 each act as charge relay system in the active site. Cysteines 275 and 279 form a disulfide.

It belongs to the peptidase S1B family.

Its subcellular location is the secreted. The catalysed reaction is Preferential cleavage: Glu-|-Xaa, Asp-|-Xaa.. In terms of biological role, specific for hydrolysis of peptide bonds on the carboxyl side of acidic amino acid residues, with a strong preference for Glu. The protein is Glutamyl endopeptidase (blaSE) of Bacillus licheniformis (strain ATCC 14580 / DSM 13 / JCM 2505 / CCUG 7422 / NBRC 12200 / NCIMB 9375 / NCTC 10341 / NRRL NRS-1264 / Gibson 46).